Consider the following 1100-residue polypeptide: Collagen alpha-2(I) chain (1100 aa).

Residues 1–982 (QYDGVKAPDP…PGPAGGGYDV (982 aa)) are disordered. Composition is skewed to low complexity over residues 122–170 (EPGA…AAGP), 200–209 (EPGPNGAVGP), and 216–237 (PGNN…AGAP). Pro residues predominate over residues 239–249 (FPGPRGGPGPQ). Positions 251–261 (PQGAAGQRGLA) are enriched in low complexity. Gly residues predominate over residues 268–277 (GVKGDGGPKG). Composition is skewed to low complexity over residues 333 to 352 (MPGA…PGDA), 358 to 385 (SGPA…AGPA), 435 to 448 (APGP…TGAT), and 460 to 472 (QGAS…QGLP). A compositionally biased stretch (gly residues) spans 473–482 (GPAGGAGEAG). The segment covering 507–517 (NPGAAGASGPQ) has biased composition (low complexity). Residues 530 to 557 (GTDGGKGEPGAAGAAGGPGHQGPGGMPG) show a composition bias toward gly residues. Residues 568–579 (KGEKGEGGHRGP) show a composition bias toward basic and acidic residues. Low complexity predominate over residues 633–646 (PAGAPGFAGPPGAD). The segment covering 656 to 665 (GPSGGKGESG) has biased composition (gly residues). Composition is skewed to low complexity over residues 666-691 (PSGP…TGAR), 702-729 (FPGA…PAGK), and 757-775 (SGEK…LGLQ). Residues 788–797 (GSPGGAGAVG) show a composition bias toward gly residues. Low complexity-rich tracts occupy residues 798-820 (EAGR…LGLP) and 854-866 (AGPT…PGNR). A compositionally biased stretch (gly residues) spans 867-876 (GESGPGGAAG). Over residues 877–892 (AVGPAGARGAAGPSGP) the composition is skewed to low complexity. Basic and acidic residues predominate over residues 893 to 907 (RGEKGVAGEKGERGM). Low complexity predominate over residues 916-935 (LQGMPGPSGPSGDTGSAGPN). The region spanning 1071 to 1100 (TRLPLLDLAPLDLGGADQEFGLDLGPVCFK) is the Fibrillar collagen NC1 domain.

This sequence belongs to the fibrillar collagen family.

It is found in the secreted. The protein localises to the extracellular space. It localises to the extracellular matrix. The protein is Collagen alpha-2(I) chain of Epinephelus caninus (Dogtooth grouper).